Consider the following 271-residue polypeptide: DNA repair protein RecO (271 aa).

A disordered region spans residues 248–271 (AVGVEDSVRQDGDRDSTTRTPSSA). Basic and acidic residues predominate over residues 253–264 (DSVRQDGDRDST).

The protein belongs to the RecO family.

Functionally, involved in DNA repair and RecF pathway recombination. The polypeptide is DNA repair protein RecO (Rhodococcus opacus (strain B4)).